We begin with the raw amino-acid sequence, 205 residues long: High frequency lysogenization protein HflD homolog (205 aa).

This sequence belongs to the HflD family.

It localises to the cytoplasm. It is found in the cell inner membrane. The polypeptide is High frequency lysogenization protein HflD homolog (Shewanella piezotolerans (strain WP3 / JCM 13877)).